The chain runs to 229 residues: UPF0758 protein Mbar_A2303 (229 aa).

Positions 106-228 constitute an MPN domain; that stretch reads KVCSPKDVYT…YVSLKDEGFV (123 aa). Residues H177, H179, and D190 each coordinate Zn(2+). The JAMM motif motif lies at 177–190; the sequence is HNHPSGDPSPSRED.

This sequence belongs to the UPF0758 family.

The chain is UPF0758 protein Mbar_A2303 from Methanosarcina barkeri (strain Fusaro / DSM 804).